Reading from the N-terminus, the 150-residue chain is Myeloid-derived growth factor homolog (150 aa).

The signal sequence occupies residues 1 to 22 (MTFLKYLLILCTIFLMVTNSLS).

This sequence belongs to the MYDGF family.

The protein localises to the secreted. The protein is Myeloid-derived growth factor homolog of Dictyostelium discoideum (Social amoeba).